Consider the following 72-residue polypeptide: UPF0270 protein ESA_04379 (72 aa).

It belongs to the UPF0270 family.

The protein is UPF0270 protein ESA_04379 of Cronobacter sakazakii (strain ATCC BAA-894) (Enterobacter sakazakii).